The primary structure comprises 280 residues: Proteasome subunit beta 2 (280 aa).

The propeptide at 1–52 (MTERERGQGLPAEFFAVGTASFVELLSRTAPQLLPVNRVRDGSHPMPDIPHG) is removed in mature form; by autocatalysis. Threonine 53 acts as the Nucleophile in catalysis.

Belongs to the peptidase T1B family. As to quaternary structure, the 20S proteasome core is composed of 14 alpha and 14 beta subunits that assemble into four stacked heptameric rings, resulting in a barrel-shaped structure. The two inner rings, each composed of seven catalytic beta subunits, are sandwiched by two outer rings, each composed of seven alpha subunits. The catalytic chamber with the active sites is on the inside of the barrel. Has a gated structure, the ends of the cylinder being occluded by the N-termini of the alpha-subunits. Is capped by the proteasome-associated ATPase, ARC.

The protein resides in the cytoplasm. The catalysed reaction is Cleavage of peptide bonds with very broad specificity.. The protein operates within protein degradation; proteasomal Pup-dependent pathway. The formation of the proteasomal ATPase ARC-20S proteasome complex, likely via the docking of the C-termini of ARC into the intersubunit pockets in the alpha-rings, may trigger opening of the gate for substrate entry. Interconversion between the open-gate and close-gate conformations leads to a dynamic regulation of the 20S proteasome proteolysis activity. Component of the proteasome core, a large protease complex with broad specificity involved in protein degradation. The chain is Proteasome subunit beta 2 from Thermomonospora curvata (strain ATCC 19995 / DSM 43183 / JCM 3096 / KCTC 9072 / NBRC 15933 / NCIMB 10081 / Henssen B9).